Here is a 552-residue protein sequence, read N- to C-terminus: Glutamine--tRNA ligase (552 aa).

Positions 34-44 (PEPNGYLHIGH) match the 'HIGH' region motif. Residues 35 to 37 (EPN) and 41 to 47 (HIGHAKS) each bind ATP. L-glutamine is bound by residues aspartate 67 and tyrosine 212. Residues threonine 231, 261–262 (RL), and 269–271 (MSK) contribute to the ATP site. Positions 268–272 (VMSKR) match the 'KMSKS' region motif.

It belongs to the class-I aminoacyl-tRNA synthetase family. In terms of assembly, monomer.

The protein resides in the cytoplasm. It carries out the reaction tRNA(Gln) + L-glutamine + ATP = L-glutaminyl-tRNA(Gln) + AMP + diphosphate. This Aliivibrio fischeri (strain MJ11) (Vibrio fischeri) protein is Glutamine--tRNA ligase.